Here is a 496-residue protein sequence, read N- to C-terminus: Costunolide synthase (496 aa).

A helical; Signal-anchor for type II membrane protein membrane pass occupies residues 4–24 (FTIFSLVVASLVFFACWALVA). Residues asparagine 26, asparagine 168, asparagine 280, and asparagine 412 are each glycosylated (N-linked (GlcNAc...) asparagine). Cysteine 434 lines the heme pocket.

Belongs to the cytochrome P450 family. The cofactor is heme. Expressed in floral glandular trichomes.

The protein resides in the membrane. The catalysed reaction is germacra-1(10),4,11(13)-trien-12-oate + reduced [NADPH--hemoprotein reductase] + O2 = (+)-costunolide + oxidized [NADPH--hemoprotein reductase] + 2 H2O. It participates in secondary metabolite biosynthesis; terpenoid biosynthesis. Its function is as follows. Involved in the biosynthesis of germacrene-derived sesquiterpene lactones. Component of the parthenolide biosynthetic pathway; parthenolide and conjugates are promising anti-cancer drugs highly active against colon cancer cells. Hydroxylates germacrene A acid to 6-alpha-hydroxy-germacrene A acid, a precursor of sesquiterpene lactones that spontaneously undergoes a lactonization which yields costunolide. This is Costunolide synthase from Tanacetum parthenium (Feverfew).